Reading from the N-terminus, the 356-residue chain is ATP-dependent 6-phosphofructokinase (356 aa).

ATP-binding positions include glycine 15, 78–79 (KG), and 115–118 (GEGT). Glutamate 116 lines the Mg(2+) pocket. Substrate contacts are provided by residues 138 to 140 (TID), arginine 175, 182 to 184 (MGR), glutamate 235, arginine 272, and 278 to 281 (HLQR). Aspartate 140 acts as the Proton acceptor in catalysis.

This sequence belongs to the phosphofructokinase type A (PFKA) family. Mixed-substrate PFK group III subfamily. In terms of assembly, homodimer or homotetramer. The cofactor is Mg(2+).

The protein localises to the cytoplasm. The catalysed reaction is beta-D-fructose 6-phosphate + ATP = beta-D-fructose 1,6-bisphosphate + ADP + H(+). Its pathway is carbohydrate degradation; glycolysis; D-glyceraldehyde 3-phosphate and glycerone phosphate from D-glucose: step 3/4. Functionally, catalyzes the phosphorylation of D-fructose 6-phosphate to fructose 1,6-bisphosphate by ATP, the first committing step of glycolysis. The sequence is that of ATP-dependent 6-phosphofructokinase from Chloroflexus aggregans (strain MD-66 / DSM 9485).